The chain runs to 122 residues: Large ribosomal subunit protein uL14 (122 aa).

Belongs to the universal ribosomal protein uL14 family. Part of the 50S ribosomal subunit. Forms a cluster with proteins L3 and L19. In the 70S ribosome, L14 and L19 interact and together make contacts with the 16S rRNA in bridges B5 and B8.

In terms of biological role, binds to 23S rRNA. Forms part of two intersubunit bridges in the 70S ribosome. In Ralstonia nicotianae (strain ATCC BAA-1114 / GMI1000) (Ralstonia solanacearum), this protein is Large ribosomal subunit protein uL14.